A 473-amino-acid chain; its full sequence is Biotin-dependent acetyl-/propionyl-coenzyme A carboxylase beta6 subunit (473 aa).

The CoA carboxyltransferase N-terminal domain occupies 1–224 (MTIMAPEAVG…QGHFDRSKAE (224 aa)). A CoA carboxyltransferase C-terminal domain is found at 225-473 (AGDTDIHALL…RRGRHKNIPL (249 aa)).

This sequence belongs to the AccD/PCCB family. The biotin-dependent acyl-CoA carboxylase complex is composed of AccA3, which contains the biotin carboxylase (BC) and biotin carboxyl carrier protein (BCCP) domains, and AccD6, which contains the carboxyl transferase (CT) domain.

The enzyme catalyses N(6)-carboxybiotinyl-L-lysyl-[protein] + acetyl-CoA = N(6)-biotinyl-L-lysyl-[protein] + malonyl-CoA. It catalyses the reaction N(6)-carboxybiotinyl-L-lysyl-[protein] + propanoyl-CoA = methylmalonyl-CoA + N(6)-biotinyl-L-lysyl-[protein]. It functions in the pathway lipid metabolism; fatty acid biosynthesis. It participates in lipid metabolism; mycolic acid biosynthesis. Component of a biotin-dependent acyl-CoA carboxylase complex. This subunit transfers the CO2 from carboxybiotin to the CoA ester substrate. When associated with the alpha3 subunit AccA3, is involved in the carboxylation of acetyl-CoA and propionyl-CoA. In Mycobacterium bovis (strain ATCC BAA-935 / AF2122/97), this protein is Biotin-dependent acetyl-/propionyl-coenzyme A carboxylase beta6 subunit (accD6).